Reading from the N-terminus, the 192-residue chain is Glycerol-3-phosphate acyltransferase (192 aa).

The next 5 membrane-spanning stretches (helical) occupy residues 4–24 (MFWLLATFAYLLGSLSFAILL), 54–74 (LAILTLLGDLCKGLLPILIAS), 80–100 (IAQQGWIGVCAVLGHLFPVYF), 112–132 (AGVLLGLYPPAAALAIAAWLL), and 154–174 (LLAWQEPHALLPMSVLTLLIV).

The protein belongs to the PlsY family. Probably interacts with PlsX.

The protein localises to the cell inner membrane. It carries out the reaction an acyl phosphate + sn-glycerol 3-phosphate = a 1-acyl-sn-glycero-3-phosphate + phosphate. Its pathway is lipid metabolism; phospholipid metabolism. Its function is as follows. Catalyzes the transfer of an acyl group from acyl-phosphate (acyl-PO(4)) to glycerol-3-phosphate (G3P) to form lysophosphatidic acid (LPA). This enzyme utilizes acyl-phosphate as fatty acyl donor, but not acyl-CoA or acyl-ACP. This chain is Glycerol-3-phosphate acyltransferase, found in Pseudomonas savastanoi pv. phaseolicola (strain 1448A / Race 6) (Pseudomonas syringae pv. phaseolicola (strain 1448A / Race 6)).